A 274-amino-acid polypeptide reads, in one-letter code: 2,3,4,5-tetrahydropyridine-2,6-dicarboxylate N-succinyltransferase (274 aa).

Residues Arg104 and Asp141 each contribute to the substrate site.

It belongs to the transferase hexapeptide repeat family. In terms of assembly, homotrimer.

The protein localises to the cytoplasm. The enzyme catalyses (S)-2,3,4,5-tetrahydrodipicolinate + succinyl-CoA + H2O = (S)-2-succinylamino-6-oxoheptanedioate + CoA. It functions in the pathway amino-acid biosynthesis; L-lysine biosynthesis via DAP pathway; LL-2,6-diaminopimelate from (S)-tetrahydrodipicolinate (succinylase route): step 1/3. This is 2,3,4,5-tetrahydropyridine-2,6-dicarboxylate N-succinyltransferase from Shewanella halifaxensis (strain HAW-EB4).